Here is a 271-residue protein sequence, read N- to C-terminus: Urease accessory protein UreD (271 aa).

It belongs to the UreD family. As to quaternary structure, ureD, UreF and UreG form a complex that acts as a GTP-hydrolysis-dependent molecular chaperone, activating the urease apoprotein by helping to assemble the nickel containing metallocenter of UreC. The UreE protein probably delivers the nickel.

It is found in the cytoplasm. In terms of biological role, required for maturation of urease via the functional incorporation of the urease nickel metallocenter. The chain is Urease accessory protein UreD from Azorhizobium caulinodans (strain ATCC 43989 / DSM 5975 / JCM 20966 / LMG 6465 / NBRC 14845 / NCIMB 13405 / ORS 571).